Reading from the N-terminus, the 80-residue chain is Large ribosomal subunit protein bL31B (80 aa).

Belongs to the bacterial ribosomal protein bL31 family. Type B subfamily. As to quaternary structure, part of the 50S ribosomal subunit.

The sequence is that of Large ribosomal subunit protein bL31B from Exiguobacterium sp. (strain ATCC BAA-1283 / AT1b).